A 236-amino-acid polypeptide reads, in one-letter code: Phosphoserine phosphatase (236 aa).

The active-site Nucleophile is Asp-30. The Mg(2+) site is built by Asp-30 and Asp-32. Asp-32 acts as the Proton donor in catalysis. Substrate contacts are provided by residues Glu-39, Arg-76, 120–121, and Lys-169; that span reads SG. Asp-192 serves as a coordination point for Mg(2+). Residue Asn-195 coordinates substrate.

This sequence belongs to the HAD-like hydrolase superfamily. SerB family. It depends on Mg(2+) as a cofactor.

It catalyses the reaction O-phospho-L-serine + H2O = L-serine + phosphate. It carries out the reaction O-phospho-D-serine + H2O = D-serine + phosphate. It functions in the pathway amino-acid biosynthesis; L-serine biosynthesis; L-serine from 3-phospho-D-glycerate: step 3/3. The chain is Phosphoserine phosphatase from Polaromonas sp. (strain JS666 / ATCC BAA-500).